The chain runs to 218 residues: Alkylmercury lyase (218 aa).

This sequence belongs to the MerB family.

The catalysed reaction is an alkylmercury + H(+) = an alkane + Hg(2+). Functionally, cleaves the carbon-mercury bond of organomercurials such as phenylmercuric acetate. One product is Hg(2+), which is subsequently detoxified by the mercuric reductase. This is Alkylmercury lyase from Clostridium butyricum.